The sequence spans 705 residues: Probable cyclic nucleotide-gated ion channel 16 (705 aa).

Topologically, residues 1–57 (MSNLHLYTSARFRNFPTTFSLRHHHNDPNNQRRRSIFSKLRDKTLDPGGDLITRWNH) are cytoplasmic. Residues 58–78 (IFLITCLLALFLDPLYFYLPI) traverse the membrane as a helical segment. Topologically, residues 79–91 (VQAGTACMSIDVR) are extracellular. A helical transmembrane segment spans residues 92-112 (FGIFVTCFRNLADLSFLIHIL). Topologically, residues 113–147 (LKFKTAFVSKSSRVFGRGELVMDRREIAIRYLKSE) are cytoplasmic. A helical transmembrane segment spans residues 148–168 (FVIDLAATLPLPQIMIWFVIP). The Extracellular portion of the chain corresponds to 169–180 (NAGEFRYAAHQN). Residues 181–201 (HTLSLIVLIQYVPRFLVMLPL) form a helical membrane-spanning segment. Topologically, residues 202–222 (NRRIIKATGVAAKTAWSGAAY) are cytoplasmic. Residues 223–243 (NLILYLLVSHVLGSVWYVLSI) traverse the membrane as a helical segment. Over 244–353 (QRQHECWRRE…LAASTLSSET (110 aa)) the chain is Extracellular. The helical transmembrane segment at 354–374 (IFSCFICVAGLVFFSHLIGNV) threads the bilayer. Residues 375 to 705 (QNYLQSTTAR…MFKPEDPGFF (331 aa)) lie on the Cytoplasmic side of the membrane. A nucleoside 3',5'-cyclic phosphate-binding positions include 457-580 (FFAQ…HSKK) and Glu-528. The interval 573-588 (FRRLHSKKLQHAFRYY) is calmodulin-binding. One can recognise an IQ domain in the interval 593 to 622 (RAWGTCFIQAAWRRYMKRKLAMELARQEEE). 2 disordered regions span residues 636–655 (EEDM…SNNQ) and 672–705 (RGVL…PGFF). Over residues 642–655 (SNNNNGDENSSNNQ) the composition is skewed to low complexity.

Belongs to the cyclic nucleotide-gated cation channel (TC 1.A.1.5) family. As to quaternary structure, homotetramer or heterotetramer.

The protein resides in the cell membrane. In terms of biological role, putative cyclic nucleotide-gated ion channel. This is Probable cyclic nucleotide-gated ion channel 16 (CNGC16) from Arabidopsis thaliana (Mouse-ear cress).